The chain runs to 333 residues: tRNA U34 carboxymethyltransferase (333 aa).

Residues lysine 97, tryptophan 111, lysine 116, glycine 136, 158–160, 189–190, methionine 205, tyrosine 209, and arginine 324 contribute to the carboxy-S-adenosyl-L-methionine site; these read DPS and IE.

The protein belongs to the class I-like SAM-binding methyltransferase superfamily. CmoB family. Homotetramer.

It carries out the reaction carboxy-S-adenosyl-L-methionine + 5-hydroxyuridine(34) in tRNA = 5-carboxymethoxyuridine(34) in tRNA + S-adenosyl-L-homocysteine + H(+). Functionally, catalyzes carboxymethyl transfer from carboxy-S-adenosyl-L-methionine (Cx-SAM) to 5-hydroxyuridine (ho5U) to form 5-carboxymethoxyuridine (cmo5U) at position 34 in tRNAs. The chain is tRNA U34 carboxymethyltransferase from Chromohalobacter salexigens (strain ATCC BAA-138 / DSM 3043 / CIP 106854 / NCIMB 13768 / 1H11).